A 297-amino-acid chain; its full sequence is MIDLSTLTTERRNNETFNLDQMTVAEALIKMNNEDKKVAFAVEEALPNIEPVISSAIEAFNKGGRLIYMGAGTSGRLGVLDAAECVPTFGVPATQVIGLIAGGDKAMTVSVEGAEDSLELGRQDLIDLKLNENDLVLGIAASGRTPYVIGALDYAKEIGAKTASLSCNLNAEISKHAEFPIEVDCGPEFLTGSTRLKSGTAQKLILNMISTISMIGIGKVYNNLMVDVKPTNEKLVERSKRIIMQATDCTYEEAEEKFIEADQDVKLAIVMLLTDCAAEEGKTKLVRANGFVKNTLN.

Residues 56–219 enclose the SIS domain; that stretch reads AIEAFNKGGR…STISMIGIGK (164 aa). The active-site Proton donor is the Glu-84. The active site involves Glu-115.

The protein belongs to the GCKR-like family. MurNAc-6-P etherase subfamily. As to quaternary structure, homodimer.

It catalyses the reaction N-acetyl-D-muramate 6-phosphate + H2O = N-acetyl-D-glucosamine 6-phosphate + (R)-lactate. It functions in the pathway amino-sugar metabolism; N-acetylmuramate degradation. Functionally, specifically catalyzes the cleavage of the D-lactyl ether substituent of MurNAc 6-phosphate, producing GlcNAc 6-phosphate and D-lactate. The polypeptide is N-acetylmuramic acid 6-phosphate etherase (Lactococcus lactis subsp. lactis (strain IL1403) (Streptococcus lactis)).